A 530-amino-acid polypeptide reads, in one-letter code: Seeligeriolysin (530 aa).

Residues 1–25 (MKIFGLVIMSLLFVSLPITQQPEAR) form the signal peptide. Residues 36–55 (TISPAETPESPPATPKTPVE) are disordered. Beta stranded transmembrane passes span 215-228 (ESQLIAKFGTAFKA), 235-244 (VNFEAISDGK), 313-322 (SNKVKTAFEA), and 330-342 (KGDVELTNIIKNS). The Conserved undecapeptide motif lies at 484–494 (ECTGLFWEWWR). Positions 516–517 (TL) match the Cholesterol binding motif.

It belongs to the cholesterol-dependent cytolysin family. Homooligomeric pore complex of 35 to 50 subunits; when inserted in the host membrane.

The protein localises to the secreted. The protein resides in the host cell membrane. In terms of biological role, a cholesterol-dependent toxin that causes cytolysis by forming pores in cholesterol containing host membranes. L.seeligeri is non-pathogenic, perhaps in part because this protein is about 25% as toxic as listeriolysin O. Mutating a single residue in the undecapeptide increases toxicity 2-fold. After binding to target membranes, the protein undergoes a major conformation change, leading to its insertion in the host membrane and formation of an oligomeric pore complex. Cholesterol is required for binding to host membranes, membrane insertion and pore formation; cholesterol binding is mediated by a Thr-Leu pair in the C-terminus. Can be reversibly inactivated by oxidation. The chain is Seeligeriolysin from Listeria seeligeri.